A 1828-amino-acid chain; its full sequence is Unconventional myosin-Va (1828 aa).

A2 is modified (N-acetylalanine). The region spanning T8–P60 is the Myosin N-terminal SH3-like domain. The Myosin motor domain maps to V69 to A763. G163–T170 contacts ATP. The disordered stretch occupies residues I599–K633. S600 bears the Phosphoserine mark. The segment covering S600–T610 has biased composition (polar residues). An actin-binding region spans residues L643 to D665. IQ domains lie at L766–C788, M789–R813, R814–I836, R837–L861, R862–R884, and T885–S914. Coiled-coil stretches lie at residues S914–A1239 and G1314–V1418. T1032 is modified (phosphothreonine). The segment at V1105 to K1147 is disordered. The segment covering T1116 to F1130 has biased composition (polar residues). Positions I1136 to K1147 are enriched in basic and acidic residues. Residues S1425 and S1625 each carry the phosphoserine modification. The 277-residue stretch at T1507 to D1783 folds into the Dilute domain. T1733 bears the Phosphothreonine mark.

The protein belongs to the TRAFAC class myosin-kinesin ATPase superfamily. Myosin family. In terms of assembly, may be a homodimer, which associates with multiple calmodulin or myosin light chains. Interacts with RIPL2, the interaction is required for its role in dendrite formation. Interacts with MLPH. Interacts with SYTL4. Interacts with MYRIP. Interacts with RAB10; mediates the transport to the plasma membrane of SLC2A4/GLUT4 storage vesicles. Interacts with FMR1; this interaction occurs in association with polyribosome.

It catalyses the reaction ATP + H2O = ADP + phosphate + H(+). Functionally, processive actin-based motor that can move in large steps approximating the 36-nm pseudo-repeat of the actin filament. Can hydrolyze ATP in the presence of actin, which is essential for its function as a motor protein. Involved in melanosome transport. Also mediates the transport of vesicles to the plasma membrane. May also be required for some polarization process involved in dendrite formation. In Rattus norvegicus (Rat), this protein is Unconventional myosin-Va (Myo5a).